The chain runs to 360 residues: Peptide chain release factor 1 (360 aa).

Q235 carries the N5-methylglutamine modification. The tract at residues 285–305 is disordered; it reads KRQEAEASERRNLLGSGDRSD.

This sequence belongs to the prokaryotic/mitochondrial release factor family. In terms of processing, methylated by PrmC. Methylation increases the termination efficiency of RF1.

It localises to the cytoplasm. In terms of biological role, peptide chain release factor 1 directs the termination of translation in response to the peptide chain termination codons UAG and UAA. The chain is Peptide chain release factor 1 from Proteus mirabilis (strain HI4320).